A 52-amino-acid chain; its full sequence is Proteinase inhibitor PSI-1.2 (52 aa).

Disulfide bonds link C3–C32, C7–C28, C16–C38, and C31–C49.

Potent inhibitor of trypsin and a weaker inhibitor of chymotrypsin. It does not inhibit elastase and subtilisin DY. This chain is Proteinase inhibitor PSI-1.2, found in Capsicum annuum (Capsicum pepper).